The sequence spans 325 residues: MSDGDGGGEQGGGGPAEAEESALVLGRLLDRGAWRLKVAGVEKPRRDARLLAGHVLGLSPGAVLLADDRVVTPEEAQALEAVIARRETREPVSRILGHRGFWRFDLALGADTLDPRPDTETLVEAGLAVLEGCGGRILDLGTGSGCILLALLADRPGAIGLGIDIAPGAVRVALRNARALGLERRALFAVGDWAAAVAGPFDLIVSNPPYIPSADIAALEPEVARFDPSRALDGGADGLDPYRILAAQVPALLAPAGVLAVEFGQGQARDVAGLLEVGGLCPYEIKKDLSGEERCLLARRRAAGPLPPIHIDAKPSAPGNGPTKA.

S-adenosyl-L-methionine-binding positions include 141 to 145, D164, W193, and N207; that span reads GTGSG. 207–210 lines the substrate pocket; sequence NPPY. Residues 306 to 325 form a disordered region; that stretch reads LPPIHIDAKPSAPGNGPTKA.

This sequence belongs to the protein N5-glutamine methyltransferase family. PrmC subfamily.

It catalyses the reaction L-glutaminyl-[peptide chain release factor] + S-adenosyl-L-methionine = N(5)-methyl-L-glutaminyl-[peptide chain release factor] + S-adenosyl-L-homocysteine + H(+). Functionally, methylates the class 1 translation termination release factors RF1/PrfA and RF2/PrfB on the glutamine residue of the universally conserved GGQ motif. The sequence is that of Release factor glutamine methyltransferase from Rhodospirillum rubrum (strain ATCC 11170 / ATH 1.1.1 / DSM 467 / LMG 4362 / NCIMB 8255 / S1).